The chain runs to 815 residues: uncharacterized protein (815 aa).

4 disordered regions span residues 123 to 183 (QSNT…QPST), 249 to 274 (NVNNNKNNKNQNNNNNNNIENSNNTN), 592 to 668 (IKQN…NLNS), and 765 to 815 (NNEE…EEIK). Composition is skewed to polar residues over residues 135-154 (SIITNSDSPRLIVSDTTSTT) and 174-183 (DSITVLQPST). The span at 595-611 (NGSSSSNNNSKLSSTNS) shows a compositional bias: low complexity. Positions 612-639 (GQTSDNPINSSNGGQSIKKQGSNLSLNR) are enriched in polar residues. The segment covering 640–668 (QQSSTKLNNQSNNNNNNNANTTNQNNLNS) has biased composition (low complexity). Over residues 765 to 782 (NNEEHNNNNKENNNENNK) the composition is skewed to basic and acidic residues. Residues 783 to 809 (ENINNNNNIINNNNDNNCNENNNNCNE) are compositionally biased toward low complexity.

This is an uncharacterized protein from Dictyostelium discoideum (Social amoeba).